The chain runs to 254 residues: Transmembrane protein 70, mitochondrial (254 aa).

The N-terminal 78 residues, 1–78 (MLFLALGGPW…PVCWERGVRC (78 aa)), are a transit peptide targeting the mitochondrion. Residues 79 to 112 (SHTQLDKSEDGRLIYTGNLARTVFGVKCFSYSTS) lie on the Mitochondrial matrix side of the membrane. Residues 113 to 133 (LISLAFLPYIFAQNNVIFGSL) traverse the membrane as a helical segment. The Mitochondrial intermembrane portion of the chain corresponds to 134–136 (PLQ). Residues 137 to 157 (ILFYGTIGSFTVITPALLHFL) form a helical membrane-spanning segment. Topologically, residues 158–254 (TKGYVIRLYH…SEKKQLKEEK (97 aa)) are mitochondrial matrix.

The protein belongs to the TMEM70 family. As to quaternary structure, homooligomer. Interacts (homooligomer form) with ATP5MC1; this interaction facilitates the oligomer formation of subunit c/ATP5MC1 (c-ring) and the c-ring membrane insertion and also protects ATP5MC1 against intramitochondrial proteolysis. Interacts with the core subunits TMEM126B, NDUFAF1, ECSIT and ACAD9 of the MCIA complex. Interacts with ATP5MC3, TMEM242 and TIMMDC1.

Its subcellular location is the mitochondrion inner membrane. In terms of biological role, scaffold protein that participates in the c-ring assembly of mitochondrial ATP synthase (F(1)F(0) ATP synthase or complex V) by facilitating the membrane insertion and oligomer formation of the subunit c/ATP5MC1 through its interaction. Therefore, participates in the early stage of mitochondrial ATP synthase biogenesis and also protects subunit c/ATP5MC1 against intramitochondrial proteolysis. In addition, binds the mitochondrial proton-transporting ATP synthase complexes I and may play a role in the stability of its membrane-bound subassemblies. The sequence is that of Transmembrane protein 70, mitochondrial from Bos taurus (Bovine).